The following is a 299-amino-acid chain: Very long chain fatty acid elongase 5 (299 aa).

Met-1 is subject to N-acetylmethionine. 6 helical membrane-spanning segments follow: residues 26-46, 64-84, 112-132, 150-170, 205-225, and 226-246; these read WFLLDNYIPTFICSVIYLLIV, ILVVYNLGLTLLSLYMFCELV, VLRWYYFSKLIEFMDTFFFIL, MLNIWWFVMNWVPCGHSYFGA, GQLLQFVLTIIQTSCGVIWPC, and TFPLGWLYFQIGYMISLIALF. The segment at 275-299 is disordered; it reads AAVNGHTNSFSPLENNVKPRKLRKD. The span at 279 to 288 shows a compositional bias: polar residues; sequence GHTNSFSPLE. The residue at position 285 (Ser-285) is a Phosphoserine.

It belongs to the ELO family. ELOVL5 subfamily. In terms of assembly, interacts with TECR.

Its subcellular location is the endoplasmic reticulum membrane. The protein resides in the cell projection. The protein localises to the dendrite. It carries out the reaction a very-long-chain acyl-CoA + malonyl-CoA + H(+) = a very-long-chain 3-oxoacyl-CoA + CO2 + CoA. It catalyses the reaction (6Z,9Z,12Z)-octadecatrienoyl-CoA + malonyl-CoA + H(+) = (8Z,11Z,14Z)-3-oxoeicosatrienoyl-CoA + CO2 + CoA. The catalysed reaction is (9Z,12Z,15Z)-octadecatrienoyl-CoA + malonyl-CoA + H(+) = (11Z,14Z,17Z)-3-oxoeicosatrienoyl-CoA + CO2 + CoA. The enzyme catalyses (9Z)-hexadecenoyl-CoA + malonyl-CoA + H(+) = 3-oxo-(11Z)-octadecenoyl-CoA + CO2 + CoA. It carries out the reaction (9Z)-octadecenoyl-CoA + malonyl-CoA + H(+) = 3-oxo-(11Z)-eicosenoyl-CoA + CO2 + CoA. It catalyses the reaction (11Z)-octadecenoyl-CoA + malonyl-CoA + H(+) = 3-oxo-(13Z)-eicosenoyl-CoA + CO2 + CoA. The catalysed reaction is (9Z,12Z)-octadecadienoyl-CoA + malonyl-CoA + H(+) = (11Z,14Z)-3-oxoicosa-11,14-dienoyl-CoA + CO2 + CoA. The enzyme catalyses (6Z,9Z,12Z,15Z)-octadecatetraenoyl-CoA + malonyl-CoA + H(+) = (8Z,11Z,14Z,17Z)-3-oxoicosatetraenoyl-CoA + CO2 + CoA. It carries out the reaction (5Z,8Z,11Z,14Z)-eicosatetraenoyl-CoA + malonyl-CoA + H(+) = (7Z,10Z,13Z,16Z)-3-oxodocosatetraenoyl-CoA + CO2 + CoA. It catalyses the reaction (5Z,8Z,11Z,14Z,17Z)-eicosapentaenoyl-CoA + malonyl-CoA + H(+) = 3-oxo-(7Z,10Z,13Z,16Z,19Z)-docosapentaenoyl-CoA + CO2 + CoA. It participates in lipid metabolism; polyunsaturated fatty acid biosynthesis. Functionally, catalyzes the first and rate-limiting reaction of the four reactions that constitute the long-chain fatty acids elongation cycle. This endoplasmic reticulum-bound enzymatic process allows the addition of 2 carbons to the chain of long- and very long-chain fatty acids (VLCFAs) per cycle. Condensing enzyme that acts specifically toward polyunsaturated acyl-CoA with the higher activity toward C18:3(n-6) acyl-CoA. May participate in the production of monounsaturated and of polyunsaturated VLCFAs of different chain lengths that are involved in multiple biological processes as precursors of membrane lipids and lipid mediators. In conditions where the essential linoleic and alpha linoleic fatty acids are lacking it is also involved in the synthesis of Mead acid from oleic acid. The protein is Very long chain fatty acid elongase 5 of Macaca fascicularis (Crab-eating macaque).